The sequence spans 290 residues: Acetyl-coenzyme A carboxylase carboxyl transferase subunit beta (290 aa).

The region spanning 29–290 (LWGKCPECSQ…RLHGYREKRK (262 aa)) is the CoA carboxyltransferase N-terminal domain. Zn(2+) is bound by residues Cys33, Cys36, Cys52, and Cys55. The C4-type zinc finger occupies 33–55 (CPECSQVVYRKDLLENANVCSNC).

The protein belongs to the AccD/PCCB family. Acetyl-CoA carboxylase is a heterohexamer composed of biotin carboxyl carrier protein (AccB), biotin carboxylase (AccC) and two subunits each of ACCase subunit alpha (AccA) and ACCase subunit beta (AccD). Zn(2+) serves as cofactor.

The protein resides in the cytoplasm. The catalysed reaction is N(6)-carboxybiotinyl-L-lysyl-[protein] + acetyl-CoA = N(6)-biotinyl-L-lysyl-[protein] + malonyl-CoA. It functions in the pathway lipid metabolism; malonyl-CoA biosynthesis; malonyl-CoA from acetyl-CoA: step 1/1. Component of the acetyl coenzyme A carboxylase (ACC) complex. Biotin carboxylase (BC) catalyzes the carboxylation of biotin on its carrier protein (BCCP) and then the CO(2) group is transferred by the transcarboxylase to acetyl-CoA to form malonyl-CoA. The polypeptide is Acetyl-coenzyme A carboxylase carboxyl transferase subunit beta (Prochlorococcus marinus (strain MIT 9211)).